Here is a 304-residue protein sequence, read N- to C-terminus: Protoheme IX farnesyltransferase (304 aa).

Transmembrane regions (helical) follow at residues 24 to 44, 45 to 65, 107 to 127, 145 to 165, 172 to 192, 234 to 254, and 277 to 297; these read VMTL…GTIH, PVIA…AAAL, VFVM…FSIF, IVIG…AVTG, VLLF…LALF, WIGG…LVFV, and LFGY…GDRL.

The protein belongs to the UbiA prenyltransferase family. Protoheme IX farnesyltransferase subfamily.

It localises to the cell inner membrane. The enzyme catalyses heme b + (2E,6E)-farnesyl diphosphate + H2O = Fe(II)-heme o + diphosphate. It functions in the pathway porphyrin-containing compound metabolism; heme O biosynthesis; heme O from protoheme: step 1/1. Its function is as follows. Converts heme B (protoheme IX) to heme O by substitution of the vinyl group on carbon 2 of heme B porphyrin ring with a hydroxyethyl farnesyl side group. The chain is Protoheme IX farnesyltransferase from Novosphingobium aromaticivorans (strain ATCC 700278 / DSM 12444 / CCUG 56034 / CIP 105152 / NBRC 16084 / F199).